The following is a 78-amino-acid chain: Small ribosomal subunit protein bS18 (78 aa).

Belongs to the bacterial ribosomal protein bS18 family. Part of the 30S ribosomal subunit. Forms a tight heterodimer with protein bS6.

Functionally, binds as a heterodimer with protein bS6 to the central domain of the 16S rRNA, where it helps stabilize the platform of the 30S subunit. This Ligilactobacillus salivarius (strain UCC118) (Lactobacillus salivarius) protein is Small ribosomal subunit protein bS18.